The following is a 1372-amino-acid chain: DNA-directed RNA polymerase subunit beta' (1372 aa).

The Zn(2+) site is built by Cys-69, Cys-71, Cys-84, and Cys-87. Mg(2+)-binding residues include Asp-460, Asp-462, and Asp-464. Positions 808, 882, 889, and 892 each coordinate Zn(2+).

This sequence belongs to the RNA polymerase beta' chain family. In terms of assembly, the RNAP catalytic core consists of 2 alpha, 1 beta, 1 beta' and 1 omega subunit. When a sigma factor is associated with the core the holoenzyme is formed, which can initiate transcription. Mg(2+) is required as a cofactor. Requires Zn(2+) as cofactor.

It catalyses the reaction RNA(n) + a ribonucleoside 5'-triphosphate = RNA(n+1) + diphosphate. Its function is as follows. DNA-dependent RNA polymerase catalyzes the transcription of DNA into RNA using the four ribonucleoside triphosphates as substrates. This Rickettsia conorii (strain ATCC VR-613 / Malish 7) protein is DNA-directed RNA polymerase subunit beta'.